The chain runs to 214 residues: Thiamine pyrophosphokinase (214 aa).

It belongs to the thiamine pyrophosphokinase family.

It catalyses the reaction thiamine + ATP = thiamine diphosphate + AMP + H(+). Its pathway is cofactor biosynthesis; thiamine diphosphate biosynthesis; thiamine diphosphate from thiamine: step 1/1. Its function is as follows. Catalyzes the ATP-dependent phosphorylation of thiamine to thiamine pyrophosphate. Is involved in thiamine salvage. This Bacillus subtilis (strain 168) protein is Thiamine pyrophosphokinase.